The following is a 360-amino-acid chain: Peptide chain release factor 1 (360 aa).

An N5-methylglutamine modification is found at Gln-235.

The protein belongs to the prokaryotic/mitochondrial release factor family. In terms of processing, methylated by PrmC. Methylation increases the termination efficiency of RF1.

Its subcellular location is the cytoplasm. Functionally, peptide chain release factor 1 directs the termination of translation in response to the peptide chain termination codons UAG and UAA. The sequence is that of Peptide chain release factor 1 from Janthinobacterium sp. (strain Marseille) (Minibacterium massiliensis).